Consider the following 506-residue polypeptide: MAEADFKMVSEPVAHGVAEEEMASSTSDSGEESDSSSSSSSTSDSSSSSSTSGSSSGSGSSSSSSGSTSSRSRLYRKKRVPEPSRRARRAPLGTNFVDRLPQAVRNRVQALRNIQDECDKVDTLFLKAIHDLERKYAELNKPLYDRRFQIINAEYEPTEEECEWNSEDEEFSSDEEVQDNTPSEMPPLEGEEEENPKENPEVKAEEKEVPKEIPEVKDEEKEVPKEIPEVKAEEKADSKDCMEATPEVKEDPKEVPQVKADDKEQPKATEAKARAAVRETHKRVPEERLQDSVDLKRARKGKPKREDPKGIPDYWLIVLKNVDKLGPMIQKYDEPILKFLSDVSLKFSKPGQPVSYTFEFHFLPNPYFRNEVLVKTYIIKAKPDHNDPFFSWGWEIEDCKGCKIDWRRGKDVTVTTTQSRTTATGEIEIQPRVVPNASFFNFFSPPEIPMIGKLEPREDAILDEDFEIGQILHDNVILKSIYYYTGEVNGTYYQFGKHYGNKKYRK.

2 disordered regions span residues 1–95 and 157–307; these read MAEA…LGTN and PTEE…KRED. A compositionally biased stretch (low complexity) spans 35–70; the sequence is SSSSSSSTSDSSSSSSTSGSSSGSGSSSSSSGSTSS. Residues 157–178 are compositionally biased toward acidic residues; sequence PTEEECEWNSEDEEFSSDEEVQ. Residues 196 to 296 show a composition bias toward basic and acidic residues; it reads PKENPEVKAE…ERLQDSVDLK (101 aa).

This sequence belongs to the nucleosome assembly protein (NAP) family.

Its subcellular location is the nucleus. This is Nucleosome assembly protein 1-like 3 (NAP1L3) from Homo sapiens (Human).